A 2531-amino-acid chain; its full sequence is Serine/threonine-protein kinase ATR (2531 aa).

The 578-residue stretch at 1490–2067 (LIVKVAETFG…MWQSAYLLRQ (578 aa)) folds into the FAT domain. Residues 2192–2512 (FSDKVKVLHS…VSQLASSLIE (321 aa)) form the PI3K/PI4K catalytic domain. Positions 2198–2204 (VLHSNTK) are G-loop. Positions 2368-2376 (GLGDRHTKN) are catalytic loop. The activation loop stretch occupies residues 2387 to 2411 (HVDFDMIFNKGETLGTPELVPFRLT). The region spanning 2499 to 2531 (HPMQVSQLASSLIELATSEEKLSEMYLGWMATL) is the FATC domain.

It belongs to the PI3/PI4-kinase family. ATM subfamily. The cofactor is Mn(2+).

The protein localises to the nucleus. It catalyses the reaction L-seryl-[protein] + ATP = O-phospho-L-seryl-[protein] + ADP + H(+). The catalysed reaction is L-threonyl-[protein] + ATP = O-phospho-L-threonyl-[protein] + ADP + H(+). Its function is as follows. Serine/threonine protein kinase which activates checkpoint signaling upon genotoxic stresses such as ionizing radiation (IR), ultraviolet light (UV), or DNA replication stalling, thereby acting as a DNA damage sensor. Recognizes the substrate consensus sequence [ST]-Q. Phosphorylates various proteins, which collectively inhibits DNA replication and mitosis and promotes DNA repair and recombination. Prevents mitotic catastrophe by functioning in the S-phase checkpoint and cooperating with atm-1 in the checkpoint response to double-strand breaks (DSBs) after ionizing radiation (IR) to induce cell cycle arrest or apoptosis via the cep-1/p53 pathway. In response to ionizing radiation, probably required for the association between the brc-1-brd-1 heterodimer and rad-51 and let-70 in order to activate E3-ubiquitin ligase activity of the heterodimer and induce ubiquitination at DNA damage sites. The polypeptide is Serine/threonine-protein kinase ATR (Caenorhabditis elegans).